The primary structure comprises 307 residues: Cyclin-dependent kinase 5 activator 1 (307 aa).

A lipid anchor (N-myristoyl glycine) is attached at Gly-2. Ser-8 carries the phosphoserine; by CDK5 modification. The interval 97–133 is disordered; it reads TFAQPPPAQPPAPPASQLSGSQTGVSSSVKKAPHPAI. Residues 100-110 are compositionally biased toward pro residues; that stretch reads QPPPAQPPAPP. Over residues 112-125 the composition is skewed to polar residues; sequence SQLSGSQTGVSSSV. At Thr-138 the chain carries Phosphothreonine; by CDK5.

The protein belongs to the cyclin-dependent kinase 5 activator family. In terms of assembly, heterodimer composed of a catalytic subunit CDK5 and a regulatory subunit CDK5R1 (p25) and macromolecular complex composed of at least CDK5, CDK5R1 (p35) and CDK5RAP1 or CDK5RAP2 or CDK5RAP3. Only the heterodimer shows kinase activity. Interacts with EPHA4 and NGEF; may mediate the activation of NGEF by EPHA4. Interacts with RASGRF2. The complex p35/CDK5 interacts with CLOCK. In terms of processing, the p35 form is proteolytically cleaved by calpain, giving rise to the p25 form. P35 has a 5 to 10 fold shorter half-life compared to p25. The conversion results in deregulation of the CDK5 kinase: p25/CDK5 kinase displays an increased and altered tau phosphorylation in comparison to the p35/CDK5 kinase in vivo. Myristoylated. A proper myristoylation signal is essential for the proper distribution of p35. Post-translationally, phosphorylation at Ser-8 and Thr-138 by CDK5 prevents calpain-mediated proteolysis. In terms of processing, ubiquitinated, leading to its degradation: degradation of p35 by proteasome results in down-regulation of CDK5 activity. During this process, CDK5 phosphorylates p35 and induces its ubiquitination and subsequent degradation. Ubiquitinated by the CRL2(FEM1B) complex, which recognizes the -Gly-Leu-Asp-Arg C-degron at the C-terminus, leading to its degradation. As to expression, brain and neuron specific.

It is found in the cell membrane. It localises to the cell projection. The protein localises to the neuron projection. The protein resides in the nucleus. Its subcellular location is the cytoplasm. It is found in the perinuclear region. It localises to the perikaryon. Functionally, p35 is a neuron specific activator of CDK5. The complex p35/CDK5 is required for neurite outgrowth and cortical lamination. Involved in dendritic spine morphogenesis by mediating the EFNA1-EPHA4 signaling. Activator of TPKII. The complex p35/CDK5 participates in the regulation of the circadian clock by modulating the function of CLOCK protein: phosphorylates CLOCK at 'Thr-451' and 'Thr-461' and regulates the transcriptional activity of the CLOCK-BMAL1 heterodimer in association with altered stability and subcellular distribution. The chain is Cyclin-dependent kinase 5 activator 1 (Cdk5r1) from Rattus norvegicus (Rat).